A 1264-amino-acid polypeptide reads, in one-letter code: ATP-dependent helicase/nuclease subunit A (1264 aa).

One can recognise a UvrD-like helicase ATP-binding domain in the interval 12 to 482 (EQFTDSQWQA…IILAENFRSR (471 aa)). Position 33–40 (33–40 (ASAGSGKT)) interacts with ATP. Positions 520–808 (SEAADYSTEL…RVMTIHASKG (289 aa)) constitute a UvrD-like helicase C-terminal domain.

Belongs to the helicase family. AddA subfamily. In terms of assembly, heterodimer of AddA and AddB/RexB. It depends on Mg(2+) as a cofactor.

The catalysed reaction is Couples ATP hydrolysis with the unwinding of duplex DNA by translocating in the 3'-5' direction.. The enzyme catalyses ATP + H2O = ADP + phosphate + H(+). In terms of biological role, the heterodimer acts as both an ATP-dependent DNA helicase and an ATP-dependent, dual-direction single-stranded exonuclease. Recognizes the chi site generating a DNA molecule suitable for the initiation of homologous recombination. The AddA nuclease domain is required for chi fragment generation; this subunit has the helicase and 3' -&gt; 5' nuclease activities. This chain is ATP-dependent helicase/nuclease subunit A, found in Enterococcus faecalis (strain ATCC 700802 / V583).